The following is a 192-amino-acid chain: Cytochrome b-245 light chain (192 aa).

Residues 2-7 (GQIEWA) are Cytoplasmic-facing. Residues 8–30 (MWANEQALASGLILITGGIVATA) form a helical membrane-spanning segment. The Extracellular portion of the chain corresponds to 31-35 (GRFTQ). A helical membrane pass occupies residues 36 to 53 (WYFGAYSIVAGVLICLLE). Residues 54–69 (YPRGKRKKGSTMERCG) are Cytoplasmic-facing. Residues 70-80 (QKYLTAVVKLF) lie within the membrane without spanning it. At 81-86 (GPLTRN) the chain is on the cytoplasmic side. The chain crosses the membrane as a helical span at residues 87–104 (YYVRAVLHLLLSVPAGFL). A topological domain (extracellular) is located at residue leucine 105. Residues 106–126 (ATILGTVCLAIASVIYLLAAI) form a helical membrane-spanning segment. Residues 127–192 (RGEQWTPIEP…NPIPVTDEVV (66 aa)) are Cytoplasmic-facing. Residues 134–192 (IEPKPKERPQVGGTIKQPPTNPPPRPPAEVRKKPSEAEEEAASAGGPQVNPIPVTDEVV) form a disordered region. Position 147 is a phosphothreonine (threonine 147). Residue lysine 149 forms a Glycyl lysine isopeptide (Lys-Gly) (interchain with G-Cter in ubiquitin) linkage. Residues serine 168 and serine 176 each carry the phosphoserine modification.

The protein belongs to the p22phox family. Component of the phagocyte NADPH oxidase core complex/cytochrome b558 complex, composed of CYBB (heavy chain (beta)) and CYBA (light chain (alpha)). Component of the phagocyte NADPH oxidase complex composed of an obligatory core heterodimer formed by the membrane proteins CYBA and CYBB and the cytosolic regulatory subunits NCF1/p47-phox, NCF2/p67-phox, NCF4/p40-phox and the small GTPase RAC1 or RAC2. Interacts with NCF1 (via SH3 domain). Interacts with SH3PXD2A. Interacts with DUOX1, DUOX2 and TPO. Interacts with NOX4; this interaction mediates superoxide generation. Interacts with calprotectin (S100A8/9). Interacts with GBP7. Interacts with NOXO1. Forms a heterodimer with NOX3 and is essential for activity and cell membrane localization of NOX3. Interacts with NOX1. Phosphorylation at Thr-147 enhances NADPH oxidase activity by promoting NCF1/p47-phox binding. Post-translationally, ubiquitinated at Lys-149 likely by RNF145. Expressed to a relatively high level in kidney, spleen, thymus and lung, and to a lower level in aorta, adrenals, and heart. Expression is not detected in liver or brain.

The protein localises to the cell membrane. Functionally, subunit of NADPH oxidase complexes that is required for the NADPH oxidase activity that generates, in various cell types, superoxide from molecular oxygen utilizing NADPH as an electron donor. Subunit of the phagocyte NADPH oxidase complex that mediates the transfer of electrons from cytosolic NADPH to O2 to produce the superoxide anion (O2(-)). In the activated complex, electrons are first transferred from NADPH to flavin adenine dinucleotide (FAD) and subsequently transferred via two heme molecules to molecular oxygen, producing superoxide through an outer-sphere reaction. Activation of the NADPH oxidase complex is initiated by the assembly of cytosolic subunits of the NADPH oxidase complex with the core NADPH oxidase complex to form a complex at the plasma membrane or phagosomal membrane. This activation process is initiated by phosphorylation dependent binding of the cytosolic NCF1/p47-phox subunit to the C-terminus of CYBA/p22-phox. Aassociates with NOX3 to form a functional NADPH oxidase constitutively generating superoxide. The chain is Cytochrome b-245 light chain from Rattus norvegicus (Rat).